A 326-amino-acid polypeptide reads, in one-letter code: GTP 3',8-cyclase (326 aa).

The Radical SAM core domain maps to 5-227; it reads GHGRTVDYLR…ALGREGASPS (223 aa). Arg14 contributes to the GTP binding site. Residues Cys21 and Cys25 each coordinate [4Fe-4S] cluster. An S-adenosyl-L-methionine-binding site is contributed by Tyr27. Cys28 contacts [4Fe-4S] cluster. Arg64 contacts GTP. An S-adenosyl-L-methionine-binding site is contributed by Gly68. A GTP-binding site is contributed by Thr95. Ser119 is an S-adenosyl-L-methionine binding site. Lys155 contributes to the GTP binding site. S-adenosyl-L-methionine is bound at residue Met189. [4Fe-4S] cluster is bound by residues Cys250 and Cys253. Residue 255-257 coordinates GTP; sequence RIR. Cys267 serves as a coordination point for [4Fe-4S] cluster.

This sequence belongs to the radical SAM superfamily. MoaA family. As to quaternary structure, monomer and homodimer. Requires [4Fe-4S] cluster as cofactor.

It catalyses the reaction GTP + AH2 + S-adenosyl-L-methionine = (8S)-3',8-cyclo-7,8-dihydroguanosine 5'-triphosphate + 5'-deoxyadenosine + L-methionine + A + H(+). Its pathway is cofactor biosynthesis; molybdopterin biosynthesis. In terms of biological role, catalyzes the cyclization of GTP to (8S)-3',8-cyclo-7,8-dihydroguanosine 5'-triphosphate. The chain is GTP 3',8-cyclase from Sulfurovum sp. (strain NBC37-1).